A 77-amino-acid polypeptide reads, in one-letter code: uncharacterized protein (77 aa).

2 stretches are compositionally biased toward basic and acidic residues: residues 1–24 (CPVAEEHFLVPAHEARGTQGEDQR) and 37–58 (EGPKLGEERPKPEAGALEERGP). The segment at 1-77 (CPVAEEHFLV…RHGPKRKPAK (77 aa)) is disordered. A compositionally biased stretch (basic residues) spans 66 to 77 (RPRHGPKRKPAK).

This is an uncharacterized protein from Macaca fascicularis (Crab-eating macaque).